The primary structure comprises 271 residues: DNA repair protein RecO (271 aa).

The protein belongs to the RecO family.

In terms of biological role, involved in DNA repair and RecF pathway recombination. The sequence is that of DNA repair protein RecO from Rhodococcus erythropolis (strain PR4 / NBRC 100887).